We begin with the raw amino-acid sequence, 336 residues long: tRNA N6-adenosine threonylcarbamoyltransferase (336 aa).

H114 and H118 together coordinate Fe cation. Substrate contacts are provided by residues 136-140 (LVSGG), D169, G182, D186, and N275. D301 lines the Fe cation pocket.

Belongs to the KAE1 / TsaD family. Fe(2+) serves as cofactor.

The protein localises to the cytoplasm. It carries out the reaction L-threonylcarbamoyladenylate + adenosine(37) in tRNA = N(6)-L-threonylcarbamoyladenosine(37) in tRNA + AMP + H(+). Its function is as follows. Required for the formation of a threonylcarbamoyl group on adenosine at position 37 (t(6)A37) in tRNAs that read codons beginning with adenine. Is involved in the transfer of the threonylcarbamoyl moiety of threonylcarbamoyl-AMP (TC-AMP) to the N6 group of A37, together with TsaE and TsaB. TsaD likely plays a direct catalytic role in this reaction. This chain is tRNA N6-adenosine threonylcarbamoyltransferase, found in Streptococcus pneumoniae (strain JJA).